An 81-amino-acid polypeptide reads, in one-letter code: Small ribosomal subunit protein bS20 (81 aa).

This sequence belongs to the bacterial ribosomal protein bS20 family.

Binds directly to 16S ribosomal RNA. In Mycoplasma capricolum subsp. capricolum (strain California kid / ATCC 27343 / NCTC 10154), this protein is Small ribosomal subunit protein bS20.